Reading from the N-terminus, the 303-residue chain is Olfactory receptor 10A2 (303 aa).

Topologically, residues 1–12 (MSFSSLPTEIQS) are extracellular. A helical transmembrane segment spans residues 13 to 33 (LLFLTFLTIYLVTLMGNCLII). Over 34 to 41 (LVTLADPM) the chain is Cytoplasmic. The chain crosses the membrane as a helical span at residues 42 to 62 (LHSPMYFFLRNLSFLEIGFNL). Residues 63–86 (VIVPKMLGTLLAQDTTISFLGCAT) are Extracellular-facing. A disulfide bridge links Cys-84 with Cys-176. Residues 87–107 (QMYFFFFFGVAECFLLATMAY) form a helical membrane-spanning segment. Residues 108–126 (DRYVAICSPLHYPVIMNQR) lie on the Cytoplasmic side of the membrane. The helical transmembrane segment at 127 to 147 (TRAKLAAASWFPGFPVATVQT) threads the bilayer. Residues 148–184 (TWLFSFPFCGTNKVNHFFCDSPPVLRLVCADTALFEI) lie on the Extracellular side of the membrane. The chain crosses the membrane as a helical span at residues 185–204 (YAIVGTILVVMIPCLLILCS). The Cytoplasmic portion of the chain corresponds to 205-224 (YTHIAAAILKIPSAKGKNKA). The helical transmembrane segment at 225–245 (FSTCSSHLLVVSLFYISLSLT) threads the bilayer. The Extracellular portion of the chain corresponds to 246-258 (YFRPKSNNSPEGK). A helical membrane pass occupies residues 259–279 (KLLSLSYTVMTPMLNPIIYSL). The Cytoplasmic portion of the chain corresponds to 280-301 (RNNEVKNALSRTVSKALALRNC).

This sequence belongs to the G-protein coupled receptor 1 family.

The protein resides in the cell membrane. In terms of biological role, odorant receptor. The protein is Olfactory receptor 10A2 (OR10A2) of Homo sapiens (Human).